The chain runs to 157 residues: Protein TIFY 8 (157 aa).

Residues 33-68 (VPGTTEQLTIFYSGSMVKFDNVPREKIRYACRLRRL) enclose the Tify domain. Residues 126-147 (SIGAQRTGTPPSRRRIHARGKS) form a disordered region. The span at 137–147 (SRRRIHARGKS) shows a compositional bias: basic residues.

This sequence belongs to the TIFY/JAZ family. Post-translationally, ubiquitinated. Targeted for degradation by the SCF(COI1) E3 ubiquitin ligase-proteasome pathway during jasmonate signaling.

In terms of biological role, repressor of jasmonate responses. The polypeptide is Protein TIFY 8 (Oryza sativa subsp. japonica (Rice)).